The chain runs to 374 residues: 4-galactosyl-N-acetylglucosaminide 3-alpha-L-fucosyltransferase FUT5 (374 aa).

Residues 1–15 lie on the Cytoplasmic side of the membrane; that stretch reads MDPLGPAKPQWLWRR. The chain crosses the membrane as a helical; Signal-anchor for type II membrane protein span at residues 16–34; it reads CLAGLLFQLLVAVCFFSYL. The Lumenal segment spans residues 35-374; the sequence is RVSQDHATGS…TVRSIAAWFT (340 aa). Residues Asn60, Asn105, Asn167, and Asn198 are each glycosylated (N-linked (GlcNAc...) asparagine).

It belongs to the glycosyltransferase 10 family.

It is found in the golgi apparatus. Its subcellular location is the golgi stack membrane. The enzyme catalyses a beta-D-galactosyl-(1-&gt;3)-N-acetyl-beta-D-glucosaminyl derivative + GDP-beta-L-fucose = a beta-D-galactosyl-(1-&gt;3)-[alpha-L-fucosyl-(1-&gt;4)]-N-acetyl-beta-D-glucosaminyl derivative + GDP + H(+). It catalyses the reaction an N-acetyl-alpha-neuraminyl-(2-&gt;3)-beta-D-galactosyl-(1-&gt;4)-N-acetyl-beta-D-glucosaminyl derivative + GDP-beta-L-fucose = an alpha-Neu5Ac-(2-&gt;3)-beta-D-Gal-(1-&gt;4)-[alpha-L-Fuc-(1-&gt;3)]-beta-D-GlcNAc derivative + GDP + H(+). The catalysed reaction is an alpha-Neu5Ac-(2-&gt;3)-beta-D-Gal-(1-&gt;4)-beta-D-GlcNAc-(1-&gt;3)-beta-D-Gal-(1-&gt;4)-[alpha-L-Fuc-(1-&gt;3)]-beta-D-GlcNAc derivative + GDP-beta-L-fucose = an alpha-Neu5Ac-(2-&gt;3)-beta-D-Gal-(1-&gt;4)-[alpha-L-Fuc-(1-&gt;3)]-beta-D-GlcNAc-(1-&gt;3)-beta-D-Gal-(1-&gt;4)-[alpha-L-Fuc-(1-&gt;3)]-beta-D-GlcNAc derivative + GDP + H(+). It carries out the reaction a beta-D-galactosyl-(1-&gt;4)-N-acetyl-beta-D-glucosaminyl derivative + GDP-beta-L-fucose = a beta-D-galactosyl-(1-&gt;4)-[alpha-L-fucosyl-(1-&gt;3)]-N-acetyl-beta-D-glucosaminyl derivative + GDP + H(+). The enzyme catalyses a neolactoside nLc4Cer + GDP-beta-L-fucose = a neolactoside III(3)-alpha-Fuc-nLc4Cer + GDP + H(+). It catalyses the reaction a neolactoside nLc6Cer + GDP-beta-L-fucose = beta-D-galactosyl-(1-&gt;4)-N-acetyl-beta-D-glucosaminyl-(1-&gt;3)-beta-D-galactosyl-(1-&gt;4)-[alpha-L-fucosyl-(1-&gt;3)]-N-acetyl-beta-D-glucosaminyl-(1-&gt;3)-beta-D-galactosyl-(1-&gt;4)-beta-D-glucosyl-(1&lt;-&gt;1')-ceramide + GDP + H(+). The catalysed reaction is a neolactoside nLc6Cer(d18:1(4E)) + GDP-beta-L-fucose = a neolactoside III(3)-alpha-Fuc-nLc6Cer(d18:1(4E)) + GDP + H(+). It carries out the reaction a neolactoside nLc4Cer(d18:1(4E)) + GDP-beta-L-fucose = a neolactoside III(3)-alpha-Fuc-nLc4Cer(d18:1(4E)) + GDP + H(+). The enzyme catalyses a neolactoside VI(3)-alpha-NeuNAc-nLc6Cer + GDP-beta-L-fucose = a neolactoside VI(3)-alpha-NeuAc,III(3)-alphaFuc-nLc6Cer + GDP + H(+). It catalyses the reaction beta-D-galactosyl-(1-&gt;4)-N-acetyl-D-glucosamine + GDP-beta-L-fucose = beta-D-galactosyl-(1-&gt;4)-[alpha-L-fucosyl-(1-&gt;3)]-N-acetyl-D-glucosamine + GDP + H(+). The catalysed reaction is N-acetyl-alpha-neuraminosyl-(2-&gt;3)-beta-D-galactosyl-(1-&gt;4)-N-acetyl-beta-D-glucosamine + GDP-beta-L-fucose = N-acetyl-alpha-neuraminosyl-(2-&gt;3)-beta-D-galactosyl-(1-&gt;4)-[alpha-L-fucosyl-(1-&gt;3)]-N-acetyl-beta-D-glucosamine + GDP + H(+). It carries out the reaction alpha-L-Fuc-(1-&gt;2)-beta-D-Gal-(1-&gt;4)-D-GlcNAc + GDP-beta-L-fucose = alpha-L-Fuc-(1-&gt;2)-beta-D-Gal-(1-&gt;4)-[alpha-L-Fuc-(1-&gt;3)]-D-GlcNAc + GDP + H(+). The enzyme catalyses an alpha-Neu5Ac-(2-&gt;3)-beta-D-Gal-(1-&gt;3)-D-GlcNAc derivative + GDP-beta-L-fucose = an alpha-Neu5Ac-(2-&gt;3)-beta-D-Gal-(1-&gt;3)-[alpha-L-Fuc-(1-&gt;4)]-beta-D-GlcNAc derivative + GDP + H(+). It functions in the pathway protein modification; protein glycosylation. Functionally, catalyzes preferentially the transfer of L-fucose, from a guanosine diphosphate-beta-L-fucose, to the N-acetyl-beta-D-glucosamine (GlcNAc) of an N-acetyllactosamine unit (type 2 chain) of an oligosaccharide, or a glycoprotein- and a glycolipid-linked N-acetyllactosamine unit via an alpha (1,3) linkage and participates in the surface expression of VIM-2, Lewis X/SSEA-1 and sialyl Lewis X antigens. Preferentially transfers fucose to the GlcNAc of an internal N-acetyllactosamine unit of a poly-N-acetyllactosamine chain acceptor substrate. Also catalyzes to a lesser extend the transfer of L-fucose to the GlcNAc of a type 1 (beta-D-galactosyl-(1-&gt;3)-N-acetyl-beta-D-glucosaminyl) or H-type 1 (alpha-L-Fuc-(1-&gt;2)-beta-D-Gal-(1-&gt;3)-D-GlcNAc) chain oligosaccharide via an alpha (1,4) linkage. Preferentially catalyzes sialylated type 2 oligosaccharide acceptors over neutral type 2 or H type 2 (alpha-L-Fuc-(1-&gt;2)-beta-D-Gal-(1-&gt;4)-D-GlcNAc) oligosaccharide acceptors. Lactose-based structures are also acceptor substrates. The polypeptide is 4-galactosyl-N-acetylglucosaminide 3-alpha-L-fucosyltransferase FUT5 (Gorilla gorilla gorilla (Western lowland gorilla)).